A 358-amino-acid polypeptide reads, in one-letter code: Short chain dehydrogenase sor7 (358 aa).

Residues 1–22 form a disordered region; that stretch reads MSSPAIGQPPIPPTPTDANISG. Residues leucine 34, aspartate 88, asparagine 115, tyrosine 206, lysine 210, valine 238, and threonine 240 each contribute to the NADP(+) site. The Proton donor role is filled by tyrosine 206. Lysine 210 functions as the Lowers pKa of active site Tyr in the catalytic mechanism.

Belongs to the short-chain dehydrogenases/reductases (SDR) family.

Its pathway is secondary metabolite biosynthesis. Short chain dehydrogenase; part of the SOR gene cluster that mediates the biosynthesis of sorbicillinoids, a diverse group of yellow secondary metabolites that restrict growth of competing pathogenic fungi but not of bacteria. Sorbicillinoids biosynthesis requires the action of two PKSs. The SOR cluster is required for the production of trichodimerol and dihydrotrichotetronin, with sor2 being sufficient for production of trichodimerol, but not dihydrotrichotetronin in the light. Sor1 iteratively combines three acetyl units and the growing chain is modified by the ketoacyl reductase subunit, and optional by the enoyl reductase subunit in the second cycle. The polyketide is then handed over to the PKS sor2, which adds three more acetyl units, and two methyl groups. Sor2 releases an aldehyde, which undergoes spontaneous cyclization resulting in the formation of sorbicillin or 2',3'-dihydrosorbicillin. The monooxygenase sor5 oxidizes sorbicillin and 2',3'-dihydrosorbicillin to 2',3'-dihydrosorbicillinol and sorbicillinol, respectively. The oxidoreductase sor8 further converts sorbicillinol into oxosorbicillinol. Sorbicillinol is the building block for the other sorbicillinoids such as disorbicillinol, bisvertinolon, dihydrobisvertinolone, and dihydrotrichotetronine. This is Short chain dehydrogenase sor7 from Hypocrea jecorina (strain QM6a) (Trichoderma reesei).